A 219-amino-acid chain; its full sequence is MGFIYDWCEERLELQSIADDILSKFVPSHVNIFYCFGGIVLTCFIIQAATGFAMTLYYRPNVVEALSSVTYITNEVSFGWLVRSIHRTSSGLMVLVLLLHVSRVYLTAGFKKPRELTWISGVILAICTVSFGVTGYSLPWDQVGYWACKIVTATPEALNNVFPSLGTVFVTLLVGGTSVGQPTXTRFYQAHTFILPLVTLALLLTHFLMIRKQGISGPL.

The chain crosses the membrane as a helical span at residues 32-52 (IFYCFGGIVLTCFIIQAATGF). C35 contacts heme c. 2 residues coordinate heme b: H86 and H100. The next 3 helical transmembrane spans lie at 90–110 (SGLM…TAGF), 116–136 (LTWI…VTGY), and 190–210 (AHTF…FLMI). Residues H191 and H206 each contribute to the heme b site.

Belongs to the cytochrome b family. PetB subfamily. In terms of assembly, the 4 large subunits of the cytochrome b6-f complex are cytochrome b6, subunit IV (17 kDa polypeptide, PetD), cytochrome f and the Rieske protein, while the 4 small subunits are PetG, PetL, PetM and PetN. The complex functions as a dimer. Heme b is required as a cofactor. It depends on heme c as a cofactor.

The protein resides in the plastid. It is found in the chloroplast thylakoid membrane. In terms of biological role, component of the cytochrome b6-f complex, which mediates electron transfer between photosystem II (PSII) and photosystem I (PSI), cyclic electron flow around PSI, and state transitions. This is Cytochrome b6 from Amphidinium operculatum (Dinoflagellate).